A 212-amino-acid chain; its full sequence is Kynurenine formamidase (212 aa).

Tryptophan 18 serves as a coordination point for substrate. Positions 48, 52, and 54 each coordinate Zn(2+). The active-site Proton donor/acceptor is histidine 58. Positions 160 and 172 each coordinate Zn(2+).

It belongs to the Cyclase 1 superfamily. KynB family. Homodimer. It depends on Zn(2+) as a cofactor.

It carries out the reaction N-formyl-L-kynurenine + H2O = L-kynurenine + formate + H(+). It participates in amino-acid degradation; L-tryptophan degradation via kynurenine pathway; L-kynurenine from L-tryptophan: step 2/2. Catalyzes the hydrolysis of N-formyl-L-kynurenine to L-kynurenine, the second step in the kynurenine pathway of tryptophan degradation. The chain is Kynurenine formamidase from Paraburkholderia phytofirmans (strain DSM 17436 / LMG 22146 / PsJN) (Burkholderia phytofirmans).